A 572-amino-acid chain; its full sequence is MRTSQYLFSTLKETPNDAQVVSHQLMLRAGMIRPMASGLYNWLPTGIRVLKKVEKVVREEMNKGGAIEVLMPVVQPAELWEESGRWDQYGPELLRFEDRGNRNFVLGPTHEEVITDLVRREVSSYKQLPLNLYQIQTKFRDEVRPRFGVMRSREFIMKDAYSFHTTQESLQATYDVMYQVYSNIFRRLGLDFRAVQADTGSIGGSASHEFQVLASSGEDDVVFSTESDFAANIELAEAIAIGERQAPTAEMCLVDTPNAKTIAELVEQFNLPIEKTVKTLIVKGADENQPLVALIIRGDHELNEIKAQKHPLVADPLEFADETEIKAKIGAGVGSLGAVNLNIPAIIDRTVALMSDFSCGANIDGKHYFNVNWVRDVAMPEVFDLRNVVEGDPSPDGKGTLQIKRGIEVGHIFQLGKKYSEAMKATVQGEDGKPLVMTMGCYGIGVTRVVASAIEQHHDDRGIIWPSDEIAPFTVAIVPMNMHKSEAVQKYAEELYRTLQSQGVDVIFDDRKERPGVMFADMELIGIPHMVVIGEKNLDNGEIEYKNRRTGEKEMISKDKLLSVLNEKLGNL.

Belongs to the class-II aminoacyl-tRNA synthetase family. ProS type 1 subfamily. As to quaternary structure, homodimer.

The protein localises to the cytoplasm. The enzyme catalyses tRNA(Pro) + L-proline + ATP = L-prolyl-tRNA(Pro) + AMP + diphosphate. In terms of biological role, catalyzes the attachment of proline to tRNA(Pro) in a two-step reaction: proline is first activated by ATP to form Pro-AMP and then transferred to the acceptor end of tRNA(Pro). As ProRS can inadvertently accommodate and process non-cognate amino acids such as alanine and cysteine, to avoid such errors it has two additional distinct editing activities against alanine. One activity is designated as 'pretransfer' editing and involves the tRNA(Pro)-independent hydrolysis of activated Ala-AMP. The other activity is designated 'posttransfer' editing and involves deacylation of mischarged Ala-tRNA(Pro). The misacylated Cys-tRNA(Pro) is not edited by ProRS. In Haemophilus influenzae (strain 86-028NP), this protein is Proline--tRNA ligase.